A 351-amino-acid polypeptide reads, in one-letter code: Nicotinate-nucleotide--dimethylbenzimidazole phosphoribosyltransferase (351 aa).

E317 (proton acceptor) is an active-site residue.

Belongs to the CobT family.

It catalyses the reaction 5,6-dimethylbenzimidazole + nicotinate beta-D-ribonucleotide = alpha-ribazole 5'-phosphate + nicotinate + H(+). It functions in the pathway nucleoside biosynthesis; alpha-ribazole biosynthesis; alpha-ribazole from 5,6-dimethylbenzimidazole: step 1/2. In terms of biological role, catalyzes the synthesis of alpha-ribazole-5'-phosphate from nicotinate mononucleotide (NAMN) and 5,6-dimethylbenzimidazole (DMB). The sequence is that of Nicotinate-nucleotide--dimethylbenzimidazole phosphoribosyltransferase from Ectopseudomonas mendocina (strain ymp) (Pseudomonas mendocina).